Reading from the N-terminus, the 229-residue chain is Large ribosomal subunit protein uL1 (229 aa).

It belongs to the universal ribosomal protein uL1 family. Part of the 50S ribosomal subunit.

Binds directly to 23S rRNA. The L1 stalk is quite mobile in the ribosome, and is involved in E site tRNA release. In terms of biological role, protein L1 is also a translational repressor protein, it controls the translation of the L11 operon by binding to its mRNA. This Leifsonia xyli subsp. xyli (strain CTCB07) protein is Large ribosomal subunit protein uL1.